The sequence spans 201 residues: Ras-related protein Rab-1B (201 aa).

Met1 is subject to N-acetylmethionine. Residues Ser17, Gly18, Val19, Gly20, Lys21, Ser22, Cys23, Tyr33, Thr34, Glu35, Ser36, Ser39, and Thr40 each coordinate GTP. Ser22 serves as a coordination point for Mg(2+). The short motif at 30–45 (DDTYTESYISTIGVDF) is the Switch 1 element. Mg(2+) contacts are provided by Thr40 and Asp63. The switch 2 region; required for interaction with REP1/CHM stretch occupies residues 64-83 (TAGQERFRTITSSYYRGAHG). The Switch 2 motif lies at 65 to 80 (AGQERFRTITSSYYRG). Positions 66, 121, 122, 124, 151, 152, and 153 each coordinate GTP. The disordered stretch occupies residues 174–201 (GPGAASGGERPNLKIDSTPVKPAGGGCC). 2 S-geranylgeranyl cysteine lipidation sites follow: Cys200 and Cys201. Cys201 is subject to Cysteine methyl ester.

Belongs to the small GTPase superfamily. Rab family. In terms of assembly, interacts with MICAL1 and MICAL2. Interacts (in GTP-bound form) with MICALCL, MICAL1 and MILCAL3. Interacts with GDI1; the interaction requires the GDP-bound state. Interacts with CHM/REP1; the interaction requires the GDP-bound form and is necessary for prenylation by GGTase II. Interacts with RabGAP TBC1D20. Interacts (in GDP-bound form) with lipid phosphatase MTMR6 (via GRAM domain); the interaction regulates MTMR6 recruitment to the endoplasmic reticulum-Golgi intermediate compartment. Interacts (in GDP-bound form) with lipid phosphatase MTMR7. The cofactor is Mg(2+). Prenylated; by GGTase II, only after interaction of the substrate with Rab escort protein 1 (REP1).

The protein localises to the cytoplasm. Its subcellular location is the membrane. The protein resides in the preautophagosomal structure membrane. It is found in the perinuclear region. The catalysed reaction is GTP + H2O = GDP + phosphate + H(+). Its activity is regulated as follows. Regulated by guanine nucleotide exchange factors (GEFs) which promote the exchange of bound GDP for free GTP. Regulated by GTPase activating proteins (GAPs) including TBC1D20 which increases the GTP hydrolysis activity. Inhibited by GDP dissociation inhibitors (GDIs). In terms of biological role, the small GTPases Rab are key regulators of intracellular membrane trafficking, from the formation of transport vesicles to their fusion with membranes. Rabs cycle between an inactive GDP-bound form and an active GTP-bound form that is able to recruit to membranes different set of downstream effectors directly responsible for vesicle formation, movement, tethering and fusion. Plays a role in the initial events of the autophagic vacuole development which take place at specialized regions of the endoplasmic reticulum. Regulates vesicular transport between the endoplasmic reticulum and successive Golgi compartments. Required to modulate the compacted morphology of the Golgi. Promotes the recruitment of lipid phosphatase MTMR6 to the endoplasmic reticulum-Golgi intermediate compartment. The protein is Ras-related protein Rab-1B (RAB1B) of Macaca fascicularis (Crab-eating macaque).